The chain runs to 970 residues: Villin-3 (970 aa).

6 Gelsolin-like repeats span residues 31 to 111 (AVPV…ERFL), 151 to 219 (TVHV…EDGK), 273 to 339 (VLTR…TVIF), 416 to 484 (KFYS…PAEF), 536 to 576 (AIQV…QELA), and 643 to 714 (NFTQ…PQFF). The segment at 741–908 (DGVKPKLDKP…EGQPENEEGL (168 aa)) is disordered. The segment covering 755-778 (TTSSSHTGRSSVPEKSQRSRSMSF) has biased composition (polar residues). The segment covering 833-842 (AASIAAISAS) has biased composition (low complexity). A compositionally biased stretch (polar residues) spans 878–893 (KDSTPSKDSPTVTPTI). The HP domain maps to 905-970 (EEGLPVYPYE…NRLKIALQLF (66 aa)).

This sequence belongs to the villin/gelsolin family. As to expression, expressed in roots, young leaves, and inflorescences, mostly in the vasculature of roots, leaves, and filaments of the anthers and in epidermal cells of the elongation zone and root hairs. Also detected in guard cells.

The protein localises to the cytoplasm. It is found in the cytoskeleton. Functionally, ca(2+)-regulated actin-binding protein. Binds actin microfilaments (MFs). Involved in actin filament bundling, severing and capping. Caps the barbed end of actin filaments and is able to sever them in a calcium-dependent manner. MF severing is promoted by VLN1. This is Villin-3 from Oryza sativa subsp. japonica (Rice).